We begin with the raw amino-acid sequence, 352 residues long: tRNA(Ile)-lysidine synthase (352 aa).

ATP is bound at residue 58–63; sequence SGGADS.

Belongs to the tRNA(Ile)-lysidine synthase family.

The protein resides in the cytoplasm. It catalyses the reaction cytidine(34) in tRNA(Ile2) + L-lysine + ATP = lysidine(34) in tRNA(Ile2) + AMP + diphosphate + H(+). Ligates lysine onto the cytidine present at position 34 of the AUA codon-specific tRNA(Ile) that contains the anticodon CAU, in an ATP-dependent manner. Cytidine is converted to lysidine, thus changing the amino acid specificity of the tRNA from methionine to isoleucine. The chain is tRNA(Ile)-lysidine synthase from Streptomyces coelicolor (strain ATCC BAA-471 / A3(2) / M145).